The chain runs to 146 residues: Hemagglutinin component HA-17 type D (146 aa).

Botulinum toxins are produced as large progenitor toxins of 12S (M toxin, about 280 kDa) and 16S (L toxin, about 650 kDa). M toxin consists of a non-toxic, non-hemagglutinin component (NTNHA) and the neurotoxin (BoNT/D). L toxin consists of the M toxin and the 3 hemagglutinin (HA) subcomponents of 70, 33, and 17 kDa. The stoichiometry of the whole complex has been modeled as one BoNT/D, one NTNHA, three HA-70, six HA-33 and three HA-17. HA-33 and HA-17 crystallize as a heterotrimer with two HA-33 and one HA-17.

The protein localises to the secreted. Functionally, the hemagglutinin (HA) component of the progenitor toxin protects the structural integrity of the neurotoxin; may increase internalization of the neurotoxin into the bloodstream of the host. Involved in binding to the small intestine through interactions with glycolipids and glycoproteins containing sialic acid moieties. The hemagglutinin complex composed of HA-70, HA-33 and HA-17 agglutinates erythrocytes, whereas the individual compenents do not. Erythrocyte agglutination also occurs with the entire toxin complex. The sequence is that of Hemagglutinin component HA-17 type D from Clostridium botulinum D phage (Clostridium botulinum D bacteriophage).